Reading from the N-terminus, the 75-residue chain is ATP synthase subunit c (75 aa).

The next 2 membrane-spanning stretches (helical) occupy residues 12 to 32 (LASIGYGLAAIGSAIGVGIVV) and 49 to 69 (LTVLMYVGVAFTEALALIGIG).

It belongs to the ATPase C chain family. In terms of assembly, F-type ATPases have 2 components, F(1) - the catalytic core - and F(0) - the membrane proton channel. F(1) has five subunits: alpha(3), beta(3), gamma(1), delta(1), epsilon(1). F(0) has three main subunits: a(1), b(2) and c(10-14). The alpha and beta chains form an alternating ring which encloses part of the gamma chain. F(1) is attached to F(0) by a central stalk formed by the gamma and epsilon chains, while a peripheral stalk is formed by the delta and b chains.

The protein localises to the cell membrane. In terms of biological role, f(1)F(0) ATP synthase produces ATP from ADP in the presence of a proton or sodium gradient. F-type ATPases consist of two structural domains, F(1) containing the extramembraneous catalytic core and F(0) containing the membrane proton channel, linked together by a central stalk and a peripheral stalk. During catalysis, ATP synthesis in the catalytic domain of F(1) is coupled via a rotary mechanism of the central stalk subunits to proton translocation. Functionally, key component of the F(0) channel; it plays a direct role in translocation across the membrane. A homomeric c-ring of between 10-14 subunits forms the central stalk rotor element with the F(1) delta and epsilon subunits. The sequence is that of ATP synthase subunit c from Tropheryma whipplei (strain TW08/27) (Whipple's bacillus).